A 162-amino-acid chain; its full sequence is Beta-lactoglobulin (162 aa).

Cystine bridges form between cysteine 66–cysteine 160, cysteine 106–cysteine 119, and cysteine 106–cysteine 121.

It belongs to the calycin superfamily. Lipocalin family. Under physiological conditions beta-lactoglobulin exists as an equilibrium mixture of monomeric and dimeric forms. Post-translationally, alternate disulfide bonds occur in equal amounts.

It is found in the secreted. Functionally, lactoglobulin is the primary component of whey, it binds retinol and is probably involved in the transport of that molecule. The sequence is that of Beta-lactoglobulin (LGB) from Ovis aries musimon (Mouflon).